A 1112-amino-acid polypeptide reads, in one-letter code: Glutamate receptor-interacting protein 1 (1112 aa).

S43 bears the Phosphoserine mark. PDZ domains lie at V53–L136, T150–V238, L252–H336, E471–V560, H572–E657, and T672–T754. Disordered regions lie at residues K752–S796, K841–E886, and N922–R963. A compositionally biased stretch (low complexity) spans S869–S880. The segment covering A928 to P958 has biased composition (polar residues). A PDZ 7 domain is found at K988–P1070. The disordered stretch occupies residues I1077 to L1112. The span at W1086–H1099 shows a compositional bias: polar residues.

In terms of assembly, interacts with EFNB1, EPHA7, EPHB2, EFNB3, KIF5A, KIF5C, KIF5B and the C-terminal tail of PRLHR. Forms a ternary complex with GRIA2 and CSPG4. Can form homomultimers or heteromultimers with GRIP2. Interacts with GRIA2, GRIA3, GRIPAP1/GRASP1, PPFIA1, PPFIA4, FRAS1, PLCD4, PTPRF and liprins-alpha. Interacts with ATAD1 in an ATP-dependent manner. ATAD1-catalyzed ATP hydrolysis disrupts binding to ATAD1 and to GRIA2 and leads to AMPAR complex disassembly. Interacts with SLC30A9. Interacts with BUD23. Forms a complex with NSG1, GRIA2 and STX12; controls the intracellular fate of AMPAR and the endosomal sorting of the GRIA2 subunit toward recycling and membrane targeting. Interacts with NSG1. In terms of tissue distribution, expressed in brain, testis and retina. In brain highly expressed in the olfactory bulb, cortex and hippocampus and lower level in thalamus, cerebellum and spinal cord. In brain it is found in the perikaryon, dendrites, dendritic shafts, dendritic spines and, excitatory and inhibitory synapses of neurons. In retina, it is most abundant in the plexiform layers than in perikarya.

Its subcellular location is the cytoplasmic vesicle. The protein resides in the perikaryon. The protein localises to the cell projection. It localises to the dendrite. It is found in the cytoplasm. Its subcellular location is the endomembrane system. The protein resides in the postsynaptic cell membrane. The protein localises to the postsynaptic density. It localises to the endoplasmic reticulum membrane. Functionally, may play a role as a localized scaffold for the assembly of a multiprotein signaling complex and as mediator of the trafficking of its binding partners at specific subcellular location in neurons. Through complex formation with NSG1, GRIA2 and STX12 controls the intracellular fate of AMPAR and the endosomal sorting of the GRIA2 subunit toward recycling and membrane targeting. This Rattus norvegicus (Rat) protein is Glutamate receptor-interacting protein 1 (Grip1).